Consider the following 539-residue polypeptide: Phosphoenolpyruvate carboxykinase (ATP) (539 aa).

3 residues coordinate substrate: Arg64, Tyr206, and Lys212. Residues Lys212, His231, and 247-255 (GLSGTGKTT) contribute to the ATP site. The Mn(2+) site is built by Lys212 and His231. A Mn(2+)-binding site is contributed by Asp268. ATP contacts are provided by residues Glu296, Arg332, 448-449 (RI), and Thr454. Residue Arg332 coordinates substrate.

Belongs to the phosphoenolpyruvate carboxykinase (ATP) family. Monomer. Requires Mn(2+) as cofactor.

The protein localises to the cytoplasm. The enzyme catalyses oxaloacetate + ATP = phosphoenolpyruvate + ADP + CO2. It functions in the pathway carbohydrate biosynthesis; gluconeogenesis. Involved in the gluconeogenesis. Catalyzes the conversion of oxaloacetate (OAA) to phosphoenolpyruvate (PEP) through direct phosphoryl transfer between the nucleoside triphosphate and OAA. The sequence is that of Phosphoenolpyruvate carboxykinase (ATP) from Hamiltonella defensa subsp. Acyrthosiphon pisum (strain 5AT).